The chain runs to 154 residues: Protein X (154 aa).

Residues 68 to 117 (PCALRFTSARRMETTVNAHGNLPKVLHKRTLGLSAMSTTDLEAYFKDCVF) form a mitochondrial targeting sequence region.

The protein belongs to the orthohepadnavirus protein X family. In terms of assembly, may form homodimer. May interact with host CEBPA, CFLAR, CREB1, DDB1, E4F1, HBXIP, HSPD1/HSP60, NFKBIA, POLR2E and SMAD4. Interacts with host SMC5-SMC6 complex and induces its degradation. Interacts with host TRPC4AP; leading to prevent ubiquitination of TRPC4AP. Interacts with host PLSCR1; this interaction promotes ubiquitination and degradation of HBx and impairs HBx-mediated cell proliferation. A fraction may be phosphorylated in insect cells and HepG2 cells, a human hepatoblastoma cell line. Phosphorylated in vitro by host protein kinase C or mitogen-activated protein kinase. N-acetylated in insect cells.

Its subcellular location is the host cytoplasm. The protein localises to the host nucleus. The protein resides in the host mitochondrion. Its function is as follows. Multifunctional protein that plays a role in silencing host antiviral defenses and promoting viral transcription. Does not seem to be essential for HBV infection. May be directly involved in development of cirrhosis and liver cancer (hepatocellular carcinoma). Most of cytosolic activities involve modulation of cytosolic calcium. The effect on apoptosis is controversial depending on the cell types in which the studies have been conducted. May induce apoptosis by localizing in mitochondria and causing loss of mitochondrial membrane potential. May also modulate apoptosis by binding host CFLAR, a key regulator of the death-inducing signaling complex (DISC). Promotes viral transcription by using the host E3 ubiquitin ligase DDB1 to target the SMC5-SMC6 complex to proteasomal degradation. This host complex would otherwise bind to viral episomal DNA, and prevents its transcription. Moderately stimulates transcription of many different viral and cellular transcription elements. Promoters and enhancers stimulated by HBx contain DNA binding sites for NF-kappa-B, AP-1, AP-2, c-EBP, ATF/CREB, or the calcium-activated factor NF-AT. This is Protein X from Hepatitis B virus genotype B/C subtype adw (isolate Okinawa/pODW282/1998) (HBV-B).